Consider the following 314-residue polypeptide: Nodulation protein D 1 (314 aa).

An HTH lysR-type domain is found at 6 to 63 (LDLNLLVVLDALLTERTLTAAASSINLSQPAMSAAVARLRDYFNDELFTTSGRERVLT). The segment at residues 23-42 (LTAAASSINLSQPAMSAAVA) is a DNA-binding region (H-T-H motif).

Belongs to the LysR transcriptional regulatory family.

In terms of biological role, nodD regulates the expression of the nodABCFE genes which encode other nodulation proteins. NodD is also a negative regulator of its own expression. Binds flavenoids as inducers. This Mesorhizobium japonicum (strain LMG 29417 / CECT 9101 / MAFF 303099) (Mesorhizobium loti (strain MAFF 303099)) protein is Nodulation protein D 1 (nodD1).